We begin with the raw amino-acid sequence, 203 residues long: Ribosomal RNA small subunit methyltransferase G (203 aa).

S-adenosyl-L-methionine is bound by residues G73, L78, 124–125 (VE), and R139.

Belongs to the methyltransferase superfamily. RNA methyltransferase RsmG family.

It localises to the cytoplasm. It catalyses the reaction guanosine(527) in 16S rRNA + S-adenosyl-L-methionine = N(7)-methylguanosine(527) in 16S rRNA + S-adenosyl-L-homocysteine. Its function is as follows. Specifically methylates the N7 position of guanine in position 527 of 16S rRNA. In Haemophilus influenzae (strain PittEE), this protein is Ribosomal RNA small subunit methyltransferase G.